A 194-amino-acid polypeptide reads, in one-letter code: MTIKLIVGLANPGAEYAATRHNAGAWFVDLLAERLRAPLREEAKFFGYTSRVTLGGEDVRLLVPTTFMNLSGKAVAAMASFFRINPDEILVAHDELDLPLGVAKFKLGGGHGGHNGLKDIISKLGNNPNFHRLRIGIGHPGDKNKVVGFVLGKPPVSEQKLIDEAIDEAARCTEMWFTDGLTKATNRLHAFKAQ.

A tRNA-binding site is contributed by tyrosine 16. The active-site Proton acceptor is histidine 21. 3 residues coordinate tRNA: phenylalanine 67, asparagine 69, and asparagine 115.

This sequence belongs to the PTH family. Monomer.

The protein resides in the cytoplasm. The enzyme catalyses an N-acyl-L-alpha-aminoacyl-tRNA + H2O = an N-acyl-L-amino acid + a tRNA + H(+). Its function is as follows. Hydrolyzes ribosome-free peptidyl-tRNAs (with 1 or more amino acids incorporated), which drop off the ribosome during protein synthesis, or as a result of ribosome stalling. Catalyzes the release of premature peptidyl moieties from peptidyl-tRNA molecules trapped in stalled 50S ribosomal subunits, and thus maintains levels of free tRNAs and 50S ribosomes. This Escherichia coli O17:K52:H18 (strain UMN026 / ExPEC) protein is Peptidyl-tRNA hydrolase.